A 2507-amino-acid chain; its full sequence is Highly reducing polyketide synthase lcsB (2507 aa).

Positions 2–393 constitute a Ketosynthase family 3 (KS3) domain; that stretch reads AEPIAVVGMA…GVNAHVIVES (392 aa). The disordered stretch occupies residues 399-501; sequence NHDRGLSNGS…RNGYSGDDVE (103 aa). 2 stretches are compositionally biased toward polar residues: residues 405–414 and 470–488; these read SNGSTTSSSP and NDTPQSRSTPSNGDQTSHT. The malonyl-CoA:ACP transacylase (MAT) domain stretch occupies residues 581–900; sequence WVFTGQGAQW…DESLLQLAGK (320 aa). Positions 953–1080 are N-terminal hotdog fold; the sequence is HELLGSRVTE…GEARASVDKA (128 aa). The dehydratase (DH) domain stretch occupies residues 953–1232; sequence HELLGSRVTE…FKASALTRSD (280 aa). The PKS/mFAS DH domain maps to 953-1234; the sequence is HELLGSRVTE…ASALTRSDDE (282 aa). His984 serves as the catalytic Proton acceptor; for dehydratase activity. Residues 1092 to 1234 form a C-terminal hotdog fold region; it reads ARTVDANEWY…ASALTRSDDE (143 aa). Residue Asp1151 is the Proton donor; for dehydratase activity of the active site. The tract at residues 1402–1570 is methyltransferase (CMet) domain; the sequence is LGHTNPRLRI…EMVAAGFAEP (169 aa). The interval 1793–2105 is enoyl reductase (ER) (ER) domain; it reads GLLHTMGWSQ…GGRHIGKIIV (313 aa). Residues 2130–2303 form a ketoreductase (KR) domain region; the sequence is SYLLVGGLGG…ASVIDIGVMG (174 aa). The 79-residue stretch at 2425 to 2503 folds into the Carrier domain; that stretch reads EESTVIIATA…SLGDYIRTAL (79 aa). An O-(pantetheine 4'-phosphoryl)serine modification is found at Ser2463.

Its pathway is secondary metabolite biosynthesis. Functionally, highly reducing polyketide synthase; part of the gene cluster that mediates the biosynthesis of the lipopeptide antibiotics leucinostatins that show extensive biological activities, including antimalarial, antiviral, antibacterial, antifungal, and antitumor activities, as well as phytotoxic. Leucinostatin A contains nine amino acid residues, including the unusual amino acid 4-methyl-L-proline (MePro), 2-amino-6-hydroxy-4-methyl-8-oxodecanoic acid (AHyMeOA), 3-hydroxyleucine (HyLeu), alpha-aminoisobutyric acid (AIB), beta-Ala, a 4-methylhex-2-enoic acid at the N-terminus as well as a N1,N1-dimethylpropane-1,2-diamine (DPD) at the C-terminus. The biosynthesis of leucinostatins is probably initiated with the assembly of 4-methylhex-2-enoic acid by a reducing PKS. Two reducing polyketide synthases, lcsB and lcsC, have been identified in the cluster and it is not clear which is the one that assembles 4-methylhex-2-enoic acid since both contain KS, AT, DH, cMT, ER, KR and ACP domains. The polyketide residue might be transferred to the NRPS lcsA, mediated by two additional enzymes, the acyl-CoA ligase lcsD and the thioesterase lcsE. The linear polyketide carboxylic acid, which is released from PKS, is converted to a CoA thioester by lcsD, and then lcsE hydrolyzes the thiol bond and shuttles the polyketide intermediate to lcsA. The C domain of the first module catalyzed the condensation of 4-methylhex-2-enoic acid and MePro carried by domain A1, followed by successive condensations of nine amino acids to trigger the elongation of the linear peptide. A5 and A6 domains of lcsA are proposed to incorporate leucine, A2 AHyMeOA, and A3 incorporates HyLeu. A4, A7 and A8 incorporate AIB. The AHyMeOA in leucinostatin A activated by the A2 might be produced by the second PKS (lcsB or lcsC) present within the cluster. The MePro is probably produced via leucine cyclization and may originate from a separate pathway, independent of the cluster. Another nonproteinogenic amino acid, beta-Ala, could be produced by an aspartic acid decarboxylase also localized outside of the cluster. Two candidates are VFPBJ_01400 and VFPBJ_10476. The final peptide scaffold may be released by the NAD(P)H-dependent thioester reductase (TE) at the C-terminal region of lcsA. Transamination of the lcsA product by the transaminase lcsP may produce DPD at the C-terminus. Further hydroxylation steps performed alternatively by the cytochrome P450 monooxygenases lcsI, lcsK andr lcsN then yield the non-methylated leucinostatins precursor. It is also possible that leucines can be hydroxylated prior to their incorporation into the peptide. Varying extents of methylation then lead to the formation of leucinostatins A and B. This chain is Highly reducing polyketide synthase lcsB, found in Purpureocillium lilacinum (Paecilomyces lilacinus).